Here is a 503-residue protein sequence, read N- to C-terminus: ATP synthase subunit alpha (503 aa).

171–178 lines the ATP pocket; that stretch reads DRQTGKTA.

This sequence belongs to the ATPase alpha/beta chains family. F-type ATPases have 2 components, CF(1) - the catalytic core - and CF(0) - the membrane proton channel. CF(1) has five subunits: alpha(3), beta(3), gamma(1), delta(1), epsilon(1). CF(0) has four main subunits: a(1), b(1), b'(1) and c(9-12).

It is found in the cellular thylakoid membrane. The enzyme catalyses ATP + H2O + 4 H(+)(in) = ADP + phosphate + 5 H(+)(out). Functionally, produces ATP from ADP in the presence of a proton gradient across the membrane. The alpha chain is a regulatory subunit. This chain is ATP synthase subunit alpha, found in Synechococcus sp. (strain PCC 6716).